A 336-amino-acid chain; its full sequence is Cell division protein ZipA (336 aa).

Residues 1-2 lie on the Periplasmic side of the membrane; that stretch reads ME. A helical transmembrane segment spans residues 3–23; sequence LHILFFILAGLLIAVLISFSL. Topologically, residues 24–336 are cytoplasmic; the sequence is WSARREKSRI…SRQSYLARVS (313 aa). The disordered stretch occupies residues 56-77; it reads PSLNPQSYAQTTGQHGETEADN. Residues 59–70 are compositionally biased toward polar residues; the sequence is NPQSYAQTTGQH.

Belongs to the ZipA family. Interacts with FtsZ via their C-terminal domains.

Its subcellular location is the cell inner membrane. Its function is as follows. Essential cell division protein that stabilizes the FtsZ protofilaments by cross-linking them and that serves as a cytoplasmic membrane anchor for the Z ring. Also required for the recruitment to the septal ring of downstream cell division proteins. The chain is Cell division protein ZipA from Actinobacillus pleuropneumoniae serotype 3 (strain JL03).